The following is a 325-amino-acid chain: Holliday junction branch migration complex subunit RuvB (325 aa).

Residues M1–Y180 are large ATPase domain (RuvB-L). ATP contacts are provided by residues L19, R20, G61, K64, T65, S66, E127 to F129, R170, Y180, and R217. Residue T65 coordinates Mg(2+). Positions S181–G251 are small ATPAse domain (RuvB-S). A head domain (RuvB-H) region spans residues K254 to H325. DNA contacts are provided by R290, R309, and R314.

It belongs to the RuvB family. In terms of assembly, homohexamer. Forms an RuvA(8)-RuvB(12)-Holliday junction (HJ) complex. HJ DNA is sandwiched between 2 RuvA tetramers; dsDNA enters through RuvA and exits via RuvB. An RuvB hexamer assembles on each DNA strand where it exits the tetramer. Each RuvB hexamer is contacted by two RuvA subunits (via domain III) on 2 adjacent RuvB subunits; this complex drives branch migration. In the full resolvosome a probable DNA-RuvA(4)-RuvB(12)-RuvC(2) complex forms which resolves the HJ.

Its subcellular location is the cytoplasm. It carries out the reaction ATP + H2O = ADP + phosphate + H(+). Functionally, the RuvA-RuvB-RuvC complex processes Holliday junction (HJ) DNA during genetic recombination and DNA repair, while the RuvA-RuvB complex plays an important role in the rescue of blocked DNA replication forks via replication fork reversal (RFR). RuvA specifically binds to HJ cruciform DNA, conferring on it an open structure. The RuvB hexamer acts as an ATP-dependent pump, pulling dsDNA into and through the RuvAB complex. RuvB forms 2 homohexamers on either side of HJ DNA bound by 1 or 2 RuvA tetramers; 4 subunits per hexamer contact DNA at a time. Coordinated motions by a converter formed by DNA-disengaged RuvB subunits stimulates ATP hydrolysis and nucleotide exchange. Immobilization of the converter enables RuvB to convert the ATP-contained energy into a lever motion, pulling 2 nucleotides of DNA out of the RuvA tetramer per ATP hydrolyzed, thus driving DNA branch migration. The RuvB motors rotate together with the DNA substrate, which together with the progressing nucleotide cycle form the mechanistic basis for DNA recombination by continuous HJ branch migration. Branch migration allows RuvC to scan DNA until it finds its consensus sequence, where it cleaves and resolves cruciform DNA. This chain is Holliday junction branch migration complex subunit RuvB, found in Orientia tsutsugamushi (strain Boryong) (Rickettsia tsutsugamushi).